The sequence spans 247 residues: Probable transcriptional regulatory protein plu2109 (247 aa).

It belongs to the TACO1 family.

The protein resides in the cytoplasm. This chain is Probable transcriptional regulatory protein plu2109, found in Photorhabdus laumondii subsp. laumondii (strain DSM 15139 / CIP 105565 / TT01) (Photorhabdus luminescens subsp. laumondii).